A 333-amino-acid polypeptide reads, in one-letter code: Serine proteinase inhibitor 2 (333 aa).

The protein belongs to the serpin family. Poxviruses subfamily.

It localises to the host cytoplasm. In terms of biological role, weak inhibitor of the interleukin-1-beta converting enzyme (ICE) and of granzyme B. Does not form a stable complex with ICE, but can for a stable complex with granzyme B. The polypeptide is Serine proteinase inhibitor 2 (SERP2) (Myxoma virus (strain Uriarra) (MYXV)).